The sequence spans 783 residues: ATP-dependent DNA helicase Hel308 (783 aa).

ATP is bound by residues Gln29 and 47–54 (VPTASGKT). Positions 34-209 (ERGVTEGANL…WLDAELVDSD (176 aa)) constitute a Helicase ATP-binding domain. Residues 154–157 (DEVH) carry the DEAH box motif. The region spanning 242–443 (QTAAVVADTL…EPALRTHVLA (202 aa)) is the Helicase C-terminal domain. A disordered region spans residues 744–783 (ETVGHPDPGMDGVAADTDAAPESGGEAGGDEGQASLGDFS).

Belongs to the helicase family. Hel308 subfamily. In terms of assembly, monomer.

It carries out the reaction Couples ATP hydrolysis with the unwinding of duplex DNA by translocating in the 3'-5' direction.. The enzyme catalyses ATP + H2O = ADP + phosphate + H(+). Its function is as follows. DNA-dependent ATPase and 3'-5' DNA helicase that may be involved in repair of stalled replication forks. This chain is ATP-dependent DNA helicase Hel308, found in Halobacterium salinarum (strain ATCC 700922 / JCM 11081 / NRC-1) (Halobacterium halobium).